A 684-amino-acid chain; its full sequence is MTQATGDARMPDEESDLLQIKPLGAGQEVGRSCIMLEFKGKKIMLDCGIHPGLSGMDALPYVDLIEADEIDLLFISHFHLDHCGALPWFLMKTSFKGRCFMTHATKAIYRWMLSDYIKISNISTEQMLYTEADLEASMEKIETINFHEERDVMGVRFCAYIAGHVLGAAMFMIEIAGIKILYTGDFSRQEDRHLMAAEVPPMKPDVLITESTYGTHIHEKREDRENRFTSLVQKIVQQGGRCLIPVFALGRAQELLLILDEFWSQNPDLHEIPIYYASSLAKKCMAVYQTYINAMNDRIRRQIAVNNPFVFRHISNLKGIDHFEDIGPCVIMASPGMMQSGLSRELFESWCTDPKNGVIIAGYCVEGTLAKAVLSEPEEITTLSGQKLPLNMSVDYISFSAHTDYQQTSEFIRLLKPTHVVLVHGEQNEMSRLKLALQREYEADASTDIKFYNPRNTHAVDLYFRGEKTAKVMGSLAAKNSEVGSKLSGVLVKRDFKYHLLAPSDLGKYTDMSMSVVTQRQSIPWGSSLSTLELLLDRIGAGCVEVLEAERKLRVFGCIELTVEQKIIVMEWQATHVNDVYADAVLACIMQSELGGTNLKGATKQTKSEDSRFRECLIETLQDTFGDNCVPKMFEGDLLPVTVSGKRAEINLETLAISCAEDDVLRQMLNTTVQKLHQTLVSAL.

His77, His79, Asp81, His82, His164, and Asp185 together coordinate Zn(2+). Residue His402 is the Proton donor of the active site. A Zn(2+)-binding site is contributed by His424.

It belongs to the metallo-beta-lactamase superfamily. RNA-metabolizing metallo-beta-lactamase-like family. CPSF3 subfamily. As to quaternary structure, component of the cleavage and polyadenylation specificity factor (CPSF) complex, composed of at least Clp, Cpsf73, Cpsf100 and Cpsf160. Interacts with Sym and Cpsf100 forming a core cleavage factor required for both polyadenylated and histone mRNA processing. Interacts with Slbp and Lsm11. It depends on Zn(2+) as a cofactor.

Its subcellular location is the nucleus. In terms of biological role, component of the cleavage and polyadenylation specificity factor (CPSF) complex that plays a key role in pre-mRNA 3'-end formation, recognizing the AAUAAA signal sequence and interacting with poly(A) polymerase and other factors to bring about cleavage and poly(A) addition. Has endonuclease activity and functions as an mRNA 3'-end-processing endonuclease. Required for the cotranscriptional processing of 3'-ends of polyadenylated and histone pre-mRNA. The polypeptide is Cleavage and polyadenylation specificity factor 73 (Cpsf73) (Drosophila melanogaster (Fruit fly)).